The sequence spans 402 residues: MTVTLCSPTEDDWPGMFLLAAASFTDFIGPESATAWRTLVPTDGAVVVRDGAGPGSEVVGMALYMDLRLAVPGEVVLPTAGLSFVAVAPTHRRRGLLRAMCAELHRRIADSGYPVAALHASEGGIYGRFGYGPATTLHELTVDRRFARFHADAPGGGLGGSSVRLVRPTEHRGEFEAIYERWRQQVPGGLLRPQVLWDELLAECKAAPGGDRESFALLHPDGYALYRVDRTDLKLARVSELRAVTADAHCALWRALIGLDSMERISIITHPQDPLPHLLTDTRLARTTWRQDGLWLRIMNVPAALEARGYAHEVGEFSTVLEVSDGGRFALKIGDGRARCTPTDAAAEIEMDRDVLGSLYLGAHRASTLAAANRLRTKDSQLLRRLDAAFASDVPVQTAFEF.

Residues 3 to 154 form the N-acetyltransferase domain; the sequence is VTLCSPTEDD…RFARFHADAP (152 aa). Residues 85–87, 93–98, and 121–122 contribute to the acetyl-CoA site; these read VAV, RRGLLR, and SE. The active-site Proton donor is Y126. F402 (proton acceptor; via carboxylate) is an active-site residue.

Belongs to the acetyltransferase Eis family. In terms of assembly, homohexamer; trimer of dimers.

The protein resides in the secreted. It is found in the host cytoplasmic vesicle. It localises to the host phagosome. Its subcellular location is the extracellular vesicle. The protein localises to the bacterial extracellular vesicle. The protein resides in the host extracellular space. It catalyses the reaction L-lysyl-[protein] + acetyl-CoA = N(6)-acetyl-L-lysyl-[protein] + CoA + H(+). Functionally, effector that is released into the host cell and affects host immune responses. Acts as an acetyltransferase that acetylates lysine residues of host proteins. The chain is N-acetyltransferase Eis from Mycobacterium bovis (strain ATCC BAA-935 / AF2122/97).